Consider the following 374-residue polypeptide: UDP-N-acetylglucosamine--N-acetylmuramyl-(pentapeptide) pyrophosphoryl-undecaprenol N-acetylglucosamine transferase (374 aa).

UDP-N-acetyl-alpha-D-glucosamine-binding positions include 13 to 15, asparagine 124, arginine 165, serine 193, and glutamine 294; that span reads TGG.

It belongs to the glycosyltransferase 28 family. MurG subfamily.

Its subcellular location is the cell inner membrane. It carries out the reaction di-trans,octa-cis-undecaprenyl diphospho-N-acetyl-alpha-D-muramoyl-L-alanyl-D-glutamyl-meso-2,6-diaminopimeloyl-D-alanyl-D-alanine + UDP-N-acetyl-alpha-D-glucosamine = di-trans,octa-cis-undecaprenyl diphospho-[N-acetyl-alpha-D-glucosaminyl-(1-&gt;4)]-N-acetyl-alpha-D-muramoyl-L-alanyl-D-glutamyl-meso-2,6-diaminopimeloyl-D-alanyl-D-alanine + UDP + H(+). It functions in the pathway cell wall biogenesis; peptidoglycan biosynthesis. Its function is as follows. Cell wall formation. Catalyzes the transfer of a GlcNAc subunit on undecaprenyl-pyrophosphoryl-MurNAc-pentapeptide (lipid intermediate I) to form undecaprenyl-pyrophosphoryl-MurNAc-(pentapeptide)GlcNAc (lipid intermediate II). This Rhizobium johnstonii (strain DSM 114642 / LMG 32736 / 3841) (Rhizobium leguminosarum bv. viciae) protein is UDP-N-acetylglucosamine--N-acetylmuramyl-(pentapeptide) pyrophosphoryl-undecaprenol N-acetylglucosamine transferase.